The following is a 529-amino-acid chain: MQQRRPIRRALLSVSDKAGIVEFAQALSHRGVELLSTGGTARLLADAGLAVTEVSDYTGFPEMMDGRVKTLHPKVHGGILGRRDQDDAIMTQHDIKPIDIVVVNLYPFAQTVARENCTLEDAVENIDIGGPTMVRSAAKNHKDVAIVVKSSDYTTIINEIDANEGSLTYETRFDLAIKAFEHTAAYDSMIANYFGALVPPYHGDTDKPSGHFPRTLNLNYIKKQDMRYGENSHQQAAFYIEENIHEASVATSTQLQGKALSYNNIADTDAALECVKEFAEPACVIVKHANPCGVAIGGSILDAYDRAYKTDPTSAFGGIIAFNRELDEETAQAIISRQFVEVIIAPSASDAALKVTAAKQNVRVLTSGSWQQRVPALDFKRVNGGLLVQDRDLGMVDTSQLRVVTERQPSEQELRDALFCWKVAKFVKSNAIVYARDNMTIGIGAGQMSRVYSAKIAGIKAADEGLEVKGSAMASDAFFPFRDGIDAAAAVGISCVIQPGGSIRDDEVIAAANEHGIAMIFTDMRHFRH.

Residues 1–148 form the MGS-like domain; sequence MQQRRPIRRA…KNHKDVAIVV (148 aa).

The protein belongs to the PurH family.

The enzyme catalyses (6R)-10-formyltetrahydrofolate + 5-amino-1-(5-phospho-beta-D-ribosyl)imidazole-4-carboxamide = 5-formamido-1-(5-phospho-D-ribosyl)imidazole-4-carboxamide + (6S)-5,6,7,8-tetrahydrofolate. The catalysed reaction is IMP + H2O = 5-formamido-1-(5-phospho-D-ribosyl)imidazole-4-carboxamide. Its pathway is purine metabolism; IMP biosynthesis via de novo pathway; 5-formamido-1-(5-phospho-D-ribosyl)imidazole-4-carboxamide from 5-amino-1-(5-phospho-D-ribosyl)imidazole-4-carboxamide (10-formyl THF route): step 1/1. The protein operates within purine metabolism; IMP biosynthesis via de novo pathway; IMP from 5-formamido-1-(5-phospho-D-ribosyl)imidazole-4-carboxamide: step 1/1. The chain is Bifunctional purine biosynthesis protein PurH from Pectobacterium atrosepticum (strain SCRI 1043 / ATCC BAA-672) (Erwinia carotovora subsp. atroseptica).